A 130-amino-acid polypeptide reads, in one-letter code: MARPTKKGGAKKQKKNVPNGIAHIQSTFNNTIVTIADTRGDVISWASAGSSGFKGAKKGTPFAAQTAADNAARRAMEQGMRQIEVMVSGPGAGRETAIRALQGAGLEITLIRDVTPIPHNGCRPPKRRRV.

The protein belongs to the universal ribosomal protein uS11 family. As to quaternary structure, part of the 30S ribosomal subunit. Interacts with proteins S7 and S18. Binds to IF-3.

In terms of biological role, located on the platform of the 30S subunit, it bridges several disparate RNA helices of the 16S rRNA. Forms part of the Shine-Dalgarno cleft in the 70S ribosome. The protein is Small ribosomal subunit protein uS11 of Gloeothece citriformis (strain PCC 7424) (Cyanothece sp. (strain PCC 7424)).